Consider the following 860-residue polypeptide: DNA mismatch repair protein MutS (860 aa).

Residue 607–614 coordinates ATP; it reads GPNMSGKS.

It belongs to the DNA mismatch repair MutS family.

Its function is as follows. This protein is involved in the repair of mismatches in DNA. It is possible that it carries out the mismatch recognition step. This protein has a weak ATPase activity. The sequence is that of DNA mismatch repair protein MutS from Listeria monocytogenes serotype 4b (strain CLIP80459).